Here is a 227-residue protein sequence, read N- to C-terminus: Basic leucine zipper 24 (227 aa).

Residues 44–68 form a disordered region; that stretch reads EDKDQDRVTRGCSHTHSCNPPGPED. The 67-residue stretch at 94-160 folds into the bZIP domain; that stretch reads DSSNKKRLCG…IRLRALLVEM (67 aa). Residues 98–118 form a basic motif region; it reads KKRLCGNREAVRKYREKKKAR. Residues 122–129 form a leucine-zipper region; the sequence is LEDEVMRL.

As to quaternary structure, homodimer. In terms of tissue distribution, expressed in young leaves and cauline leaves.

The protein resides in the nucleus. Its subcellular location is the cytoplasm. Functionally, transcription factor involved in the regulation of salt stress response. Functions as a negative transcriptional regulator of salt stress acclimation response by regulating cation homeostasis. Negatively regulates the expression of genes contributing to ion and osmotic homeostasis during salt stress, such as the Na(+) transporter HKT1, the Na(+)/H(+) antiporter SOS1, the aquaporin PIP2-1 and the glutamine synthetase GLN1-3. In addition, targets genes with functions in plant growth and development, such as argonaute 4 (AGO4) and cyclophilin 19 (CYP19). In Arabidopsis thaliana (Mouse-ear cress), this protein is Basic leucine zipper 24.